Consider the following 468-residue polypeptide: Eukaryotic translation initiation factor 3 subunit M (468 aa).

The disordered stretch occupies residues 42–61 (PLIEPLRQQEQSEEEPDRKQ). Residues 206 to 377 (DLELAQTHVV…SEFLVHRATY (172 aa)) enclose the PCI domain. Residues 418–468 (MQAAAEETGQGKSGDKGAKGGDRRRNPQQQQQSQPSQPQQAREVELVGGAE) form a disordered region. The segment covering 430 to 442 (SGDKGAKGGDRRR) has biased composition (basic and acidic residues). Positions 444-457 (PQQQQQSQPSQPQQ) are enriched in low complexity.

This sequence belongs to the eIF-3 subunit M family. In terms of assembly, component of the eukaryotic translation initiation factor 3 (eIF-3) complex.

Its subcellular location is the cytoplasm. In terms of biological role, component of the eukaryotic translation initiation factor 3 (eIF-3) complex, which is involved in protein synthesis of a specialized repertoire of mRNAs and, together with other initiation factors, stimulates binding of mRNA and methionyl-tRNAi to the 40S ribosome. The eIF-3 complex specifically targets and initiates translation of a subset of mRNAs involved in cell proliferation. The polypeptide is Eukaryotic translation initiation factor 3 subunit M (Neosartorya fischeri (strain ATCC 1020 / DSM 3700 / CBS 544.65 / FGSC A1164 / JCM 1740 / NRRL 181 / WB 181) (Aspergillus fischerianus)).